The chain runs to 246 residues: 14-3-3 protein beta/alpha (246 aa).

An N-acetylmethionine modification is found at Met-1. Thr-2 bears the N-acetylthreonine; in 14-3-3 protein beta/alpha, N-terminally processed mark. Residue Thr-2 is modified to Phosphothreonine. Residue Lys-5 is modified to N6-acetyllysine. Lys-51 is modified (N6-acetyllysine; alternate). A Glycyl lysine isopeptide (Lys-Gly) (interchain with G-Cter in SUMO2); alternate cross-link involves residue Lys-51. Ser-60 carries the post-translational modification Phosphoserine. The residue at position 70 (Lys-70) is an N6-acetyllysine. 3'-nitrotyrosine occurs at positions 84 and 106. Lys-117 is modified (N6-acetyllysine). 2 positions are modified to phosphoserine: Ser-186 and Ser-232.

This sequence belongs to the 14-3-3 family. As to quaternary structure, homodimer. Interacts with SAMSN1 and PRKCE. Interacts with AKAP13. Interacts with SSH1 and TORC2/CRTC2. Interacts with ABL1; the interaction results in cytoplasmic location of ABL1 and inhibition of cABL-mediated apoptosis. Interacts with ROR2 (dimer); the interaction results in phosphorylation of YWHAB on tyrosine residues. Interacts with GAB2. Interacts with YAP1 (phosphorylated form). Interacts with the phosphorylated (by AKT1) form of SRPK2. Interacts with PKA-phosphorylated AANAT. Interacts with MYO1C. Interacts with SIRT2. Interacts with the 'Thr-369' phosphorylated form of DAPK2. Interacts with PI4KB, TBC1D22A and TBC1D22B. Interacts with the 'Ser-1134' and 'Ser-1161' phosphorylated form of SOS1. Interacts (via phosphorylated form) with YWHAB; this interaction occurs in a protein kinase AKT1-dependent manner. Interacts with SLITRK1. Interacts with SYNPO2 (phosphorylated form); YWHAB competes with ACTN2 for interaction with SYNPO2. Interacts with RIPOR2 (via phosphorylated form); this interaction occurs in a chemokine-dependent manner and does not compete for binding of RIPOR2 with RHOA nor blocks inhibition of RIPOR2-mediated RHOA activity. Interacts with MARK2 and MARK3. Interacts with TESK1; the interaction is dependent on the phosphorylation of TESK1 'Ser-439' and inhibits TESK1 kinase activity. Interacts with MEFV. Interacts with HDAC4. Interacts with ADAM22 (via C-terminus). In terms of processing, the alpha, brain-specific form differs from the beta form in being phosphorylated. Phosphorylated on Ser-60 by protein kinase C delta type catalytic subunit in a sphingosine-dependent fashion.

Its subcellular location is the cytoplasm. It localises to the melanosome. Its function is as follows. Adapter protein implicated in the regulation of a large spectrum of both general and specialized signaling pathways. Binds to a large number of partners, usually by recognition of a phosphoserine or phosphothreonine motif. Binding generally results in the modulation of the activity of the binding partner. Negative regulator of osteogenesis. Blocks the nuclear translocation of the phosphorylated form (by AKT1) of SRPK2 and antagonizes its stimulatory effect on cyclin D1 expression resulting in blockage of neuronal apoptosis elicited by SRPK2. Negative regulator of signaling cascades that mediate activation of MAP kinases via AKAP13. In Bos taurus (Bovine), this protein is 14-3-3 protein beta/alpha (YWHAB).